Reading from the N-terminus, the 407-residue chain is 4-hydroxy-3-methylbut-2-en-1-yl diphosphate synthase (ferredoxin) (407 aa).

[4Fe-4S] cluster-binding residues include Cys-316, Cys-319, Cys-350, and Glu-357.

This sequence belongs to the IspG family. The cofactor is [4Fe-4S] cluster.

The catalysed reaction is (2E)-4-hydroxy-3-methylbut-2-enyl diphosphate + 2 oxidized [2Fe-2S]-[ferredoxin] + H2O = 2-C-methyl-D-erythritol 2,4-cyclic diphosphate + 2 reduced [2Fe-2S]-[ferredoxin] + H(+). It participates in isoprenoid biosynthesis; isopentenyl diphosphate biosynthesis via DXP pathway; isopentenyl diphosphate from 1-deoxy-D-xylulose 5-phosphate: step 5/6. Functionally, converts 2C-methyl-D-erythritol 2,4-cyclodiphosphate (ME-2,4cPP) into 1-hydroxy-2-methyl-2-(E)-butenyl 4-diphosphate. In Prochlorococcus marinus (strain SARG / CCMP1375 / SS120), this protein is 4-hydroxy-3-methylbut-2-en-1-yl diphosphate synthase (ferredoxin).